The primary structure comprises 246 residues: Probable septum site-determining protein MinC (246 aa).

Belongs to the MinC family. In terms of assembly, interacts with MinD and FtsZ.

Functionally, cell division inhibitor that blocks the formation of polar Z ring septums. Rapidly oscillates between the poles of the cell to destabilize FtsZ filaments that have formed before they mature into polar Z rings. Prevents FtsZ polymerization. The chain is Probable septum site-determining protein MinC from Pseudomonas syringae pv. tomato (strain ATCC BAA-871 / DC3000).